The chain runs to 311 residues: Cyclin-dependent kinase B1-2 (311 aa).

A Protein kinase domain is found at 4 to 303 (YEKLEKVGEG…AKAALDHPYF (300 aa)). Residues 10-18 (VGEGTYGKV) and Lys-33 each bind ATP. A Phosphotyrosine modification is found at Tyr-15. Residue Asp-144 is the Proton acceptor of the active site. Thr-178 is subject to Phosphothreonine.

It belongs to the protein kinase superfamily. CMGC Ser/Thr protein kinase family. CDC2/CDKX subfamily. In terms of assembly, interacts with CKS1. As to expression, expressed in flowers.

The catalysed reaction is L-seryl-[protein] + ATP = O-phospho-L-seryl-[protein] + ADP + H(+). The enzyme catalyses L-threonyl-[protein] + ATP = O-phospho-L-threonyl-[protein] + ADP + H(+). It catalyses the reaction [DNA-directed RNA polymerase] + ATP = phospho-[DNA-directed RNA polymerase] + ADP + H(+). Together with CDKB1-1, promotes both the last division in the stomatal cell lineage as well as the number of stomata. In collaboration with MYB124 and MYB88, restrict the G1/S transition and chloroplast and nuclear number during stomatal formation, and normally maintain fate and developmental progression throughout the stomatal cell lineage. The polypeptide is Cyclin-dependent kinase B1-2 (CDKB1-2) (Arabidopsis thaliana (Mouse-ear cress)).